A 268-amino-acid polypeptide reads, in one-letter code: Putative esterase/lipase 1 (268 aa).

Residue histidine 27 is part of the active site. Catalysis depends on serine 94, which acts as the Charge relay system.

It belongs to the lipase/esterase LIP3/BchO family.

This chain is Putative esterase/lipase 1, found in Mycoplasma genitalium (strain ATCC 33530 / DSM 19775 / NCTC 10195 / G37) (Mycoplasmoides genitalium).